We begin with the raw amino-acid sequence, 454 residues long: Noelin-2 (454 aa).

Residues 1–20 (MWPLTVPPPLLLLLCSGLAG) form the signal peptide. Coiled-coil stretches lie at residues 58–85 (RDGR…LELR) and 136–193 (LEQY…AQKL). Residues Asn74, Asn155, Asn275, Asn310, Asn399, and Asn441 are each glycosylated (N-linked (GlcNAc...) asparagine). Positions 194–446 (GCGKLTGVSN…QVLYNVTLFH (253 aa)) constitute an Olfactomedin-like domain. Cys195 and Cys377 are disulfide-bonded.

As to quaternary structure, peripherally associated with AMPAR complex. AMPAR complex consists of an inner core made of 4 pore-forming GluA/GRIA proteins (GRIA1, GRIA2, GRIA3 and GRIA4) and 4 major auxiliary subunits arranged in a twofold symmetry. One of the two pairs of distinct binding sites is occupied either by CNIH2, CNIH3 or CACNG2, CACNG3. The other harbors CACNG2, CACNG3, CACNG4, CACNG8 or GSG1L. This inner core of AMPAR complex is complemented by outer core constituents binding directly to the GluA/GRIA proteins at sites distinct from the interaction sites of the inner core constituents. Outer core constituents include at least PRRT1, PRRT2, CKAMP44/SHISA9, FRRS1L and NRN1. The proteins of the inner and outer core serve as a platform for other, more peripherally associated AMPAR constituents, including OLFM2. Alone or in combination, these auxiliary subunits control the gating and pharmacology of the AMPAR complex and profoundly impact their biogenesis and protein processing. Interacts with GRIA2. Interacts with OLFM1 and OLFM3. Interacts with SRF; the interaction promotes dissociation of SRF from the transcriptional repressor HEY2. Interacts with RUNX2. In terms of processing, N-glycosylated. Expressed in aortic smooth muscle (at protein level). In the fetus, expressed in the brain and ocular tissues including lens vesicle and optic cup.

It is found in the secreted. It localises to the synapse. Its subcellular location is the membrane. The protein resides in the nucleus. The protein localises to the cytoplasm. In terms of biological role, involved in transforming growth factor beta (TGF-beta)-induced smooth muscle differentiation. TGF-beta induces expression and translocation of OLFM2 to the nucleus where it binds to SRF, causing its dissociation from the transcriptional repressor HEY2/HERP1 and facilitating binding of SRF to target genes. Plays a role in AMPAR complex organization. Is a regulator of vascular smooth-muscle cell (SMC) phenotypic switching, that acts by promoting RUNX2 and inhibiting MYOCD binding to SRF. SMC phenotypic switching is the process through which vascular SMCs undergo transition between a quiescent contractile phenotype and a proliferative synthetic phenotype in response to pathological stimuli. SMC phenotypic plasticity is essential for vascular development and remodeling. The protein is Noelin-2 (OLFM2) of Homo sapiens (Human).